The following is a 486-amino-acid chain: Cobyric acid synthase (486 aa).

A GATase cobBQ-type domain is found at 248–435 (VLNVVVPVLP…LHGLFESPAA (188 aa)). Cysteine 329 (nucleophile) is an active-site residue. Histidine 427 is an active-site residue.

Belongs to the CobB/CobQ family. CobQ subfamily.

It participates in cofactor biosynthesis; adenosylcobalamin biosynthesis. In terms of biological role, catalyzes amidations at positions B, D, E, and G on adenosylcobyrinic A,C-diamide. NH(2) groups are provided by glutamine, and one molecule of ATP is hydrogenolyzed for each amidation. The polypeptide is Cobyric acid synthase (Pseudomonas syringae pv. syringae (strain B728a)).